The following is a 1177-amino-acid chain: Lysylphosphatidylglycerol biosynthesis bifunctional protein LysX (1177 aa).

Disordered stretches follow at residues 1-40 (MRRAGRSRQFSSVEEAFSTSAARPGPRGRRSGRENTAKFV) and 61-85 (VTLASPGSRSGSGPRSGPRLGPRNR). The interval 1–676 (MRRAGRSRQF…LLHHDGSAPD (676 aa)) is phosphatidylglycerol lysyltransferase. Low complexity predominate over residues 65 to 85 (SPGSRSGSGPRSGPRLGPRNR). Helical transmembrane passes span 93 to 113 (VPAAAGWTVGVIATVSLLGSV), 135 to 155 (FPDTSIAWSFVLALLAAALTA), 159 to 179 (IAWLLLLGNMILAAALNVADI), 189 to 209 (IFGENLGFAVHIVAIVLLVLA), 227 to 247 (AVLVAGDVVGILVSWGLVELF), and 281 to 301 (VFLNAIFGLFGALALIMATIV). Residues 673–693 (SAPDVSGLRPERTDAEEARSR) form a disordered region. Positions 677–1177 (VSGLRPERTD…TLPFPLAKPH (501 aa)) are lysine--tRNA ligase. Positions 681–693 (RPERTDAEEARSR) are enriched in basic and acidic residues. The OB DNA-binding region spans 738 to 816 (ITVAGRILRI…SLIVTDWRMI (79 aa)). Residues D1089 and E1096 each coordinate Mg(2+).

It in the N-terminal section; belongs to the LPG synthetase family. In the C-terminal section; belongs to the class-II aminoacyl-tRNA synthetase family. The cofactor is Mg(2+).

The protein localises to the cell membrane. The catalysed reaction is tRNA(Lys) + L-lysine + ATP = L-lysyl-tRNA(Lys) + AMP + diphosphate. The enzyme catalyses L-lysyl-tRNA(Lys) + a 1,2-diacyl-sn-glycero-3-phospho-(1'-sn-glycerol) = a 1,2-diacyl-sn-glycero-3-phospho-1'-(3'-O-L-lysyl)-sn-glycerol + tRNA(Lys). Its function is as follows. Catalyzes the production of L-lysyl-tRNA(Lys)transfer and the transfer of a lysyl group from L-lysyl-tRNA(Lys) to membrane-bound phosphatidylglycerol (PG), which produces lysylphosphatidylglycerol (LPG), one of the components of the bacterial membrane with a positive net charge. LPG synthesis contributes to the resistance to cationic antimicrobial peptides (CAMPs) and likely protects M.tuberculosis against the CAMPs produced by competiting microorganisms (bacteriocins). In fact, the modification of anionic phosphatidylglycerol with positively charged L-lysine results in repulsion of the peptides. The polypeptide is Lysylphosphatidylglycerol biosynthesis bifunctional protein LysX (lysX) (Mycolicibacterium paratuberculosis (strain ATCC BAA-968 / K-10) (Mycobacterium paratuberculosis)).